The sequence spans 486 residues: 2-succinylbenzoate--CoA ligase (486 aa).

The protein belongs to the ATP-dependent AMP-binding enzyme family. MenE subfamily.

It carries out the reaction 2-succinylbenzoate + ATP + CoA = 2-succinylbenzoyl-CoA + AMP + diphosphate. It functions in the pathway quinol/quinone metabolism; 1,4-dihydroxy-2-naphthoate biosynthesis; 1,4-dihydroxy-2-naphthoate from chorismate: step 5/7. It participates in quinol/quinone metabolism; menaquinone biosynthesis. In terms of biological role, converts 2-succinylbenzoate (OSB) to 2-succinylbenzoyl-CoA (OSB-CoA). This chain is 2-succinylbenzoate--CoA ligase, found in Bacillus subtilis (strain 168).